We begin with the raw amino-acid sequence, 423 residues long: Probable sodium/metabolite cotransporter BASS3, chloroplastic (423 aa).

The N-terminal 45 residues, 1–45, are a transit peptide targeting the chloroplast; sequence MAAAVAASSSSSSSSCAAVGVATASHPHRHRQARFVVSPPAPASP. The next 9 membrane-spanning stretches (helical) occupy residues 106–126, 138–158, 165–187, 192–214, 231–251, 254–274, 287–307, 318–338, and 380–400; these read ALLP…PATF, LGGI…ALAF, TIGY…RAFG, FFAG…ASFL, ISSV…VVPV, IAMA…GLLL, PVMP…PLAI, FLLL…GYWI, and VPAA…ASYW.

Belongs to the bile acid:sodium symporter (BASS) (TC 2.A.28) family.

It is found in the membrane. Its subcellular location is the plastid. The protein localises to the chloroplast envelope. Functionally, may function as sodium-coupled metabolite transporter across the chloroplast envelope. This chain is Probable sodium/metabolite cotransporter BASS3, chloroplastic (BASS3), found in Oryza sativa subsp. japonica (Rice).